The following is an 864-amino-acid chain: Alanine--tRNA ligase (864 aa).

Residues His534, His538, Cys639, and His643 each contribute to the Zn(2+) site.

Belongs to the class-II aminoacyl-tRNA synthetase family. Zn(2+) is required as a cofactor.

The protein resides in the cytoplasm. The enzyme catalyses tRNA(Ala) + L-alanine + ATP = L-alanyl-tRNA(Ala) + AMP + diphosphate. Its function is as follows. Catalyzes the attachment of alanine to tRNA(Ala) in a two-step reaction: alanine is first activated by ATP to form Ala-AMP and then transferred to the acceptor end of tRNA(Ala). Also edits incorrectly charged Ser-tRNA(Ala) and Gly-tRNA(Ala) via its editing domain. In Aster yellows witches'-broom phytoplasma (strain AYWB), this protein is Alanine--tRNA ligase.